Reading from the N-terminus, the 224-residue chain is Ribonuclease 3 (224 aa).

The 124-residue stretch at 4-127 folds into the RNase III domain; it reads IEKLEQSLTY…IIGAIHLEAG (124 aa). Glu-40 contributes to the Mg(2+) binding site. The active site involves Asp-44. Residues Asp-113 and Glu-116 each contribute to the Mg(2+) site. Glu-116 is an active-site residue. Positions 154-223 constitute a DRBM domain; the sequence is DYKTKLQEIT…AKIALEKLGA (70 aa).

This sequence belongs to the ribonuclease III family. In terms of assembly, homodimer. Mg(2+) is required as a cofactor.

It is found in the cytoplasm. It catalyses the reaction Endonucleolytic cleavage to 5'-phosphomonoester.. In terms of biological role, digests double-stranded RNA. Involved in the processing of primary rRNA transcript to yield the immediate precursors to the large and small rRNAs (23S and 16S). Also processes some mRNAs, and tRNAs when they are encoded in the rRNA operon. CRISPR (clustered regularly interspaced short palindromic repeat) is an adaptive immune system that provides protection against mobile genetic elements (viruses, transposable elements and conjugative plasmids). CRISPR clusters contain spacers, sequences complementary to antecedent mobile elements, and target invading nucleic acids. CRISPR clusters are transcribed and processed into CRISPR RNA (crRNA). In this organism endogenous ribonuclease 3 and Cas9 are required for correct coprocessing of pre-crRNA and the trans-encoded small RNA (tracrRNA). Cas9, crRNA and tracrRNA are required for cleavage of invading DNA. Complements pre-crRNA and tracrRNA coprocessing defects in an rnc deletion in S.pyogenes strain 370. The chain is Ribonuclease 3 from Campylobacter jejuni subsp. jejuni serotype O:2 (strain ATCC 700819 / NCTC 11168).